We begin with the raw amino-acid sequence, 200 residues long: Putative 3-methyladenine DNA glycosylase (200 aa).

Belongs to the DNA glycosylase MPG family.

This is Putative 3-methyladenine DNA glycosylase from Bradyrhizobium diazoefficiens (strain JCM 10833 / BCRC 13528 / IAM 13628 / NBRC 14792 / USDA 110).